The primary structure comprises 192 residues: Fe/S biogenesis protein NfuA (192 aa).

The [4Fe-4S] cluster site is built by C150 and C153.

Belongs to the NfuA family. In terms of assembly, homodimer. It depends on [4Fe-4S] cluster as a cofactor.

Involved in iron-sulfur cluster biogenesis. Binds a 4Fe-4S cluster, can transfer this cluster to apoproteins, and thereby intervenes in the maturation of Fe/S proteins. Could also act as a scaffold/chaperone for damaged Fe/S proteins. This Vesicomyosocius okutanii subsp. Calyptogena okutanii (strain HA) protein is Fe/S biogenesis protein NfuA.